The sequence spans 273 residues: Zinc finger protein 80 (273 aa).

7 consecutive C2H2-type zinc fingers follow at residues 49 to 71, 77 to 99, 103 to 127, 133 to 155, 161 to 183, 189 to 211, and 217 to 239; these read YKCK…QQIH, YECQ…VRIH, KPCK…HQIH, YECS…RMTH, FGCK…MKIH, YKCS…SMTH, and YECK…TRSH.

The protein belongs to the krueppel C2H2-type zinc-finger protein family.

Its subcellular location is the nucleus. Functionally, may be involved in transcriptional regulation. This Pongo pygmaeus (Bornean orangutan) protein is Zinc finger protein 80 (ZNF80).